We begin with the raw amino-acid sequence, 140 residues long: Large ribosomal subunit protein bL17 (140 aa).

It belongs to the bacterial ribosomal protein bL17 family. As to quaternary structure, part of the 50S ribosomal subunit. Contacts protein L32.

In Rhizorhabdus wittichii (strain DSM 6014 / CCUG 31198 / JCM 15750 / NBRC 105917 / EY 4224 / RW1) (Sphingomonas wittichii), this protein is Large ribosomal subunit protein bL17.